The following is a 74-amino-acid chain: Sec-independent protein translocase protein TatA (74 aa).

Residues Met1 to Gly21 form a helical membrane-spanning segment. The disordered stretch occupies residues Glu45 to Ala74.

It belongs to the TatA/E family. In terms of assembly, the Tat system comprises two distinct complexes: a TatABC complex, containing multiple copies of TatA, TatB and TatC subunits, and a separate TatA complex, containing only TatA subunits. Substrates initially bind to the TatABC complex, which probably triggers association of the separate TatA complex to form the active translocon.

It is found in the cell inner membrane. Functionally, part of the twin-arginine translocation (Tat) system that transports large folded proteins containing a characteristic twin-arginine motif in their signal peptide across membranes. TatA could form the protein-conducting channel of the Tat system. The sequence is that of Sec-independent protein translocase protein TatA from Actinobacillus succinogenes (strain ATCC 55618 / DSM 22257 / CCUG 43843 / 130Z).